Reading from the N-terminus, the 136-residue chain is UPF0225 protein Pnap_0466 (136 aa).

It belongs to the UPF0225 family.

This Polaromonas naphthalenivorans (strain CJ2) protein is UPF0225 protein Pnap_0466.